A 725-amino-acid polypeptide reads, in one-letter code: FYVE, RhoGEF and PH domain-containing protein 3 (725 aa).

Residues 1 to 151 (MESGRGSSTP…KADKDAGLAQ (151 aa)) form a disordered region. The segment covering 124–136 (EEADSDVGEEPDS) has biased composition (acidic residues). The residue at position 128 (Ser128) is a Phosphoserine. One can recognise a DH domain in the interval 157-341 (KLLHIAQELL…STAANHSNAA (185 aa)). The region spanning 370 to 469 (ELIKEGQIQK…WIQIIQATIE (100 aa)) is the PH 1 domain. A disordered region spans residues 487–532 (QDEDPSLSPDMPITSTSPVEPVVTTEGSSGAAGLEPRKLSSKTRRD). Residues 500–512 (TSTSPVEPVVTTE) are compositionally biased toward low complexity. Over residues 521–532 (EPRKLSSKTRRD) the composition is skewed to basic and acidic residues. An FYVE-type zinc finger spans residues 532–588 (DKEKQSCKSCGETFNSITKRRHHCKLCGAVICGKCSEFKAENSRQSRVCRDCFLTQP). Positions 538, 541, 555, 558, 563, 566, 580, and 583 each coordinate Zn(2+). The PH 2 domain occupies 604 to 703 (PSLLCGPLRL…WLETLSTAAH (100 aa)). The segment at 703 to 725 (HGDTAQDSPGALQLQVPMGAAAP) is disordered.

Its subcellular location is the cytoplasm. The protein localises to the cytoskeleton. Functionally, promotes the formation of filopodia. May activate CDC42, a member of the Ras-like family of Rho- and Rac proteins, by exchanging bound GDP for free GTP. Plays a role in regulating the actin cytoskeleton and cell shape. The chain is FYVE, RhoGEF and PH domain-containing protein 3 (FGD3) from Homo sapiens (Human).